A 518-amino-acid chain; its full sequence is G1/S-specific cyclin-E (518 aa).

The segment at 1-193 is disordered; sequence MAGRKSSRTT…DEETEDEFDL (193 aa). Positions 13–46 are enriched in basic and acidic residues; the sequence is PVKKAERKSAILSPHDELRERLLETSLDVKENIP. Positions 47–62 are enriched in polar residues; sequence ERSSSTRNESVGSQRS. Residues 82-107 are compositionally biased toward basic and acidic residues; it reads PSTEKKGNGSRDDSFSSVFSEDRETE. Low complexity predominate over residues 108-119; it reads SSVGSTSSRTRG. Positions 135 to 154 are enriched in basic and acidic residues; the sequence is SSDHNAESEESRETPQSDEH. A compositionally biased stretch (acidic residues) spans 155-192; that stretch reads DGFEEDGDVEDDVSSDVNDEEDEYDEYEEDEETEDEFD.

This sequence belongs to the cyclin family. Cyclin E subfamily. In terms of assembly, interacts with a member of the CDK2/CDK protein kinases to form a serine/threonine kinase holoenzyme complex. The cyclin subunit imparts substrate specificity to the complex.

It is found in the nucleus. Its subcellular location is the cytoplasm. It localises to the cytoskeleton. The protein localises to the microtubule organizing center. The protein resides in the centrosome. It is found in the centriole. In terms of biological role, essential for the control of the cell cycle at the G1/S (start) transition. In association with cdk-2, regulates proliferation, quiescent state and cell fate during the development of several cell lineages. In the embryo, initiates the establishment of cell polarity through the recruitment of the centrosomal proteins spd-2 and spd-5 during prophase. During the development of the vulva, controls the onset of vulval cell terminal differentiation by controlling the duration of G1 phase. During hypoderm development at early larval stages, controls syncytial fate of seam cell daughter cells. Involved in the progression of cell division in the intestinal lineage in larvae, and in particular in endoreplication, a specific growth pathway in the intestinal epithelium, required for feeding and gut development in growing larvae. By controlling the activity of translational repressor gld-1, regulates the pool of germline stem cells and the size of the mitotic zone by preventing entry into meiosis. In addition, repression of expression by gld-1 prevents mitosis re-entry in meiotic germline cells. This is G1/S-specific cyclin-E (cye-1) from Caenorhabditis briggsae.